The primary structure comprises 131 residues: (R)-mandelonitrile lyase (131 aa).

A Cupin type-2 domain is found at 42 to 104; it reads VTFEPGARTA…WHGAAPTTAM (63 aa). 5 residues coordinate Mn(2+): His-53, His-55, Gln-59, His-94, and His-96.

This sequence belongs to the cupin domain-containing hydroxynitrile lyase family. The cofactor is Mn(2+).

The catalysed reaction is (R)-mandelonitrile = benzaldehyde + hydrogen cyanide. Its function is as follows. Hydroxynitrile lyase which catalyzes mandelonitrile formation from benzaldehyde and hydrogen cyanide with high stereoselectivity in presence of manganese. This chain is (R)-mandelonitrile lyase, found in Granulicella tundricola (strain ATCC BAA-1859 / DSM 23138 / MP5ACTX9).